We begin with the raw amino-acid sequence, 166 residues long: NAD(P)H-quinone oxidoreductase subunit I, chloroplastic (166 aa).

2 consecutive 4Fe-4S ferredoxin-type domains span residues 55 to 84 (GRIH…VDWK) and 95 to 124 (LNYS…MTEE). Residues Cys64, Cys67, Cys70, Cys74, Cys104, Cys107, Cys110, and Cys114 each contribute to the [4Fe-4S] cluster site.

This sequence belongs to the complex I 23 kDa subunit family. As to quaternary structure, NDH is composed of at least 16 different subunits, 5 of which are encoded in the nucleus. [4Fe-4S] cluster is required as a cofactor.

It localises to the plastid. The protein resides in the chloroplast thylakoid membrane. The enzyme catalyses a plastoquinone + NADH + (n+1) H(+)(in) = a plastoquinol + NAD(+) + n H(+)(out). It catalyses the reaction a plastoquinone + NADPH + (n+1) H(+)(in) = a plastoquinol + NADP(+) + n H(+)(out). In terms of biological role, NDH shuttles electrons from NAD(P)H:plastoquinone, via FMN and iron-sulfur (Fe-S) centers, to quinones in the photosynthetic chain and possibly in a chloroplast respiratory chain. The immediate electron acceptor for the enzyme in this species is believed to be plastoquinone. Couples the redox reaction to proton translocation, and thus conserves the redox energy in a proton gradient. The protein is NAD(P)H-quinone oxidoreductase subunit I, chloroplastic of Calea megacephala.